Here is a 104-residue protein sequence, read N- to C-terminus: MSSVPASAYLTLAIILFCIGLFGALTKRNTVIVLVCIELMLNAANLNLVAFSKLGLFPNLTGQIFSLFTMAVAAAEAALGLAILIALYRNRTTVQVDEMDTLKG.

Helical transmembrane passes span 4-24 (VPASAYLTLAIILFCIGLFGA), 31-51 (VIVLVCIELMLNAANLNLVAF), and 67-87 (LFTMAVAAAEAALGLAILIAL).

This sequence belongs to the complex I subunit 4L family. NDH-1 is composed of 14 different subunits. Subunits NuoA, H, J, K, L, M, N constitute the membrane sector of the complex.

The protein localises to the cell membrane. It carries out the reaction a quinone + NADH + 5 H(+)(in) = a quinol + NAD(+) + 4 H(+)(out). In terms of biological role, NDH-1 shuttles electrons from NADH, via FMN and iron-sulfur (Fe-S) centers, to quinones in the respiratory chain. The immediate electron acceptor for the enzyme in this species is believed to be a menaquinone. Couples the redox reaction to proton translocation (for every two electrons transferred, four hydrogen ions are translocated across the cytoplasmic membrane), and thus conserves the redox energy in a proton gradient. This is NADH-quinone oxidoreductase subunit K from Bacillus cereus (strain ATCC 14579 / DSM 31 / CCUG 7414 / JCM 2152 / NBRC 15305 / NCIMB 9373 / NCTC 2599 / NRRL B-3711).